The primary structure comprises 328 residues: DNA-directed RNA polymerase subunit alpha (328 aa).

Residues 1–230 (MSNHGLQMPE…DHVSFFIQLE (230 aa)) are alpha N-terminal domain (alpha-NTD). Positions 248–328 (RIRELLAQPV…EEYLEEKKAS (81 aa)) are alpha C-terminal domain (alpha-CTD).

The protein belongs to the RNA polymerase alpha chain family. In terms of assembly, homodimer. The RNAP catalytic core consists of 2 alpha, 1 beta, 1 beta' and 1 omega subunit. When a sigma factor is associated with the core the holoenzyme is formed, which can initiate transcription.

It carries out the reaction RNA(n) + a ribonucleoside 5'-triphosphate = RNA(n+1) + diphosphate. Functionally, DNA-dependent RNA polymerase catalyzes the transcription of DNA into RNA using the four ribonucleoside triphosphates as substrates. The chain is DNA-directed RNA polymerase subunit alpha from Salinibacter ruber (strain DSM 13855 / M31).